The sequence spans 156 residues: Ribosomal RNA large subunit methyltransferase H (156 aa).

S-adenosyl-L-methionine contacts are provided by residues Leu73, Gly104, and 123–128 (ISSMTL).

This sequence belongs to the RNA methyltransferase RlmH family. In terms of assembly, homodimer.

It localises to the cytoplasm. The catalysed reaction is pseudouridine(1915) in 23S rRNA + S-adenosyl-L-methionine = N(3)-methylpseudouridine(1915) in 23S rRNA + S-adenosyl-L-homocysteine + H(+). Its function is as follows. Specifically methylates the pseudouridine at position 1915 (m3Psi1915) in 23S rRNA. This chain is Ribosomal RNA large subunit methyltransferase H, found in Burkholderia vietnamiensis (strain G4 / LMG 22486) (Burkholderia cepacia (strain R1808)).